The chain runs to 242 residues: 3-dehydroquinate dehydratase (242 aa).

Residues 39-41 and arginine 73 contribute to the 3-dehydroquinate site; that span reads EIR. Catalysis depends on histidine 135, which acts as the Proton donor/acceptor. Lysine 162 (schiff-base intermediate with substrate) is an active-site residue. 3-dehydroquinate is bound by residues arginine 203 and glutamine 228.

It belongs to the type-I 3-dehydroquinase family. In terms of assembly, homodimer.

The enzyme catalyses 3-dehydroquinate = 3-dehydroshikimate + H2O. It participates in metabolic intermediate biosynthesis; chorismate biosynthesis; chorismate from D-erythrose 4-phosphate and phosphoenolpyruvate: step 3/7. In terms of biological role, involved in the third step of the chorismate pathway, which leads to the biosynthesis of aromatic amino acids. Catalyzes the cis-dehydration of 3-dehydroquinate (DHQ) and introduces the first double bond of the aromatic ring to yield 3-dehydroshikimate. The polypeptide is 3-dehydroquinate dehydratase (Methanosarcina mazei (strain ATCC BAA-159 / DSM 3647 / Goe1 / Go1 / JCM 11833 / OCM 88) (Methanosarcina frisia)).